The sequence spans 422 residues: Protein arginine methyltransferase NDUFAF7, mitochondrial (422 aa).

The N-terminal 28 residues, 1 to 28 (MRTLLRLKRLMPEVLWTKRSCSSSSINK), are a transit peptide targeting the mitochondrion.

The protein belongs to the NDUFAF7 family.

It is found in the mitochondrion. It carries out the reaction L-arginyl-[protein] + 2 S-adenosyl-L-methionine = N(omega),N(omega)'-dimethyl-L-arginyl-[protein] + 2 S-adenosyl-L-homocysteine + 2 H(+). In terms of biological role, arginine methyltransferase involved in the assembly or stability of mitochondrial NADH:ubiquinone oxidoreductase complex (complex I). Acts by mediating symmetric dimethylation of 'Arg-118' of ndufs2 after it assembles into the complex I, stabilizing the early intermediate complex. The chain is Protein arginine methyltransferase NDUFAF7, mitochondrial from Danio rerio (Zebrafish).